The following is a 411-amino-acid chain: Lissencephaly-1 homolog (411 aa).

Positions 9–41 constitute a LisH domain; that stretch reads QREELNQAIADYLGTNGYADSLEAFRKEADLST. Residues 56–83 are a coiled coil; the sequence is TSVIRLQKKVMELEAKLTEAEKEVIEGA. WD repeat units follow at residues 106–147, 148–187, 191–230, 233–272, 275–334, 337–376, and 379–411; these read GHRA…RTLK, GHTDSVQDVAFDAQGKLLVSCSADLSIKLWDFQQSYECVK, GHDHNVSSVAFVPAGDYVLSASRDRTIKMWEVATGYCVKT, GHREWVRMVRVHIEGSIFATCSNDHTIRVWLTNSKDCKVE, DHEH…CLLT, GHDNWVRGLAFHPGGKYLVSASDDKTIRVWDLRNKRCMKT, and AHQHFCTSIDFHKAHPYVISGSVDQTVKVWECR.

It belongs to the WD repeat LIS1/nudF family.

The protein localises to the cytoplasm. The protein resides in the cytoskeleton. It is found in the microtubule organizing center. Its subcellular location is the centrosome. In terms of biological role, positively regulates the activity of the minus-end directed microtubule motor protein dynein. May enhance dynein-mediated microtubule sliding by targeting dynein to the microtubule plus end. Required for several dynein- and microtubule-dependent processes. This Drosophila grimshawi (Hawaiian fruit fly) protein is Lissencephaly-1 homolog.